The sequence spans 332 residues: GTP 3',8-cyclase (332 aa).

One can recognise a Radical SAM core domain in the interval 9–220; it reads GYNRRVDYLR…TQVRERIAER (212 aa). R18 contacts GTP. [4Fe-4S] cluster is bound by residues C25 and C29. Y31 is an S-adenosyl-L-methionine binding site. A [4Fe-4S] cluster-binding site is contributed by C32. R67 is a binding site for GTP. G71 serves as a coordination point for S-adenosyl-L-methionine. GTP is bound at residue T98. S122 is an S-adenosyl-L-methionine binding site. Residue K159 coordinates GTP. Residue M193 participates in S-adenosyl-L-methionine binding. Residues C258 and C261 each coordinate [4Fe-4S] cluster. 263-265 is a GTP binding site; that stretch reads RVR. C275 provides a ligand contact to [4Fe-4S] cluster.

This sequence belongs to the radical SAM superfamily. MoaA family. As to quaternary structure, monomer and homodimer. It depends on [4Fe-4S] cluster as a cofactor.

It catalyses the reaction GTP + AH2 + S-adenosyl-L-methionine = (8S)-3',8-cyclo-7,8-dihydroguanosine 5'-triphosphate + 5'-deoxyadenosine + L-methionine + A + H(+). Its pathway is cofactor biosynthesis; molybdopterin biosynthesis. In terms of biological role, catalyzes the cyclization of GTP to (8S)-3',8-cyclo-7,8-dihydroguanosine 5'-triphosphate. The polypeptide is GTP 3',8-cyclase (Pseudomonas fluorescens (strain Pf0-1)).